The chain runs to 319 residues: UDP-3-O-acylglucosamine N-acyltransferase (319 aa).

The active-site Proton acceptor is histidine 230.

This sequence belongs to the transferase hexapeptide repeat family. LpxD subfamily. Homotrimer.

The enzyme catalyses a UDP-3-O-[(3R)-3-hydroxyacyl]-alpha-D-glucosamine + a (3R)-hydroxyacyl-[ACP] = a UDP-2-N,3-O-bis[(3R)-3-hydroxyacyl]-alpha-D-glucosamine + holo-[ACP] + H(+). Its pathway is bacterial outer membrane biogenesis; LPS lipid A biosynthesis. Its function is as follows. Catalyzes the N-acylation of UDP-3-O-acylglucosamine using 3-hydroxyacyl-ACP as the acyl donor. Is involved in the biosynthesis of lipid A, a phosphorylated glycolipid that anchors the lipopolysaccharide to the outer membrane of the cell. This Campylobacter lari (strain RM2100 / D67 / ATCC BAA-1060) protein is UDP-3-O-acylglucosamine N-acyltransferase.